The chain runs to 791 residues: Nuclear cap-binding protein subunit 1-B (791 aa).

Residues 1 to 24 are disordered; that stretch reads MSRRRHSDENDGGQPHKRRRTSEP. In terms of domain architecture, MIF4G spans 28-240; the sequence is EDRLESLICR…CLWAQVQKLK (213 aa). A coiled-coil region spans residues 641–714; it reads LHSTIRKMNK…SEQKNLFLVI (74 aa). The segment at 664-687 is disordered; that stretch reads QRLAKQHKHRDSDDNDEDSGRKDG.

The protein belongs to the NCBP1 family. As to quaternary structure, component of the nuclear cap-binding complex (CBC), a heterodimer composed of ncbp1/cbp80 and ncbp2/cbp20 that interacts with m7GpppG-capped RNA. Component of an alternative nuclear cap-binding complex (CBC) composed of ncbp1/cbp80 and ncbp3.

It localises to the nucleus. It is found in the cytoplasm. Functionally, component of the cap-binding complex (CBC), which binds cotranscriptionally to the 5'-cap of pre-mRNAs and is involved in various processes such as pre-mRNA splicing, translation regulation, nonsense-mediated mRNA decay, RNA-mediated gene silencing (RNAi) by microRNAs (miRNAs) and mRNA export. The CBC complex is involved in mRNA export from the nucleus, leading to the recruitment of the mRNA export machinery to the 5'-end of mRNA and to mRNA export in a 5' to 3' direction through the nuclear pore. The CBC complex is also involved in mediating U snRNA and intronless mRNAs export from the nucleus. The CBC complex is essential for a pioneer round of mRNA translation, before steady state translation when the CBC complex is replaced by cytoplasmic cap-binding protein eIF4E. The pioneer round of mRNA translation mediated by the CBC complex plays a central role in nonsense-mediated mRNA decay (NMD), NMD only taking place in mRNAs bound to the CBC complex, but not on eIF4E-bound mRNAs. The CBC complex enhances NMD in mRNAs containing at least one exon-junction complex (EJC), promoting the interaction between UPF1 and UPF2. The CBC complex is also involved in 'failsafe' NMD, which is independent of the EJC complex, while it does not participate in Staufen-mediated mRNA decay (SMD). During cell proliferation, the CBC complex is also involved in microRNAs (miRNAs) biogenesis via its interaction with SRRT/ARS2 and is required for miRNA-mediated RNA interference. The CBC complex also acts as a negative regulator of parn, thereby acting as an inhibitor of mRNA deadenylation. In the CBC complex, NCBP1/CBP80 does not bind directly capped RNAs (m7GpppG-capped RNA) but is required to stabilize the movement of the N-terminal loop of NCBP2/CBP20 and lock the CBC into a high affinity cap-binding state with the cap structure. Associates with NCBP3 to form an alternative cap-binding complex (CBC) which plays a key role in mRNA export. The conventional CBC with NCBP2 binds both small nuclear RNA (snRNA) and messenger (mRNA) and is involved in their export from the nucleus whereas the alternative CBC with NCBP3 does not bind snRNA and associates only with mRNA thereby playing a role only in mRNA export. The sequence is that of Nuclear cap-binding protein subunit 1-B (ncbp1-b) from Xenopus laevis (African clawed frog).